A 427-amino-acid chain; its full sequence is Histidinol dehydrogenase (427 aa).

Tyr123, Gln185, and Asn208 together coordinate NAD(+). Substrate is bound by residues Ser231, Gln253, and His256. Zn(2+)-binding residues include Gln253 and His256. Residues Glu321 and His322 each act as proton acceptor in the active site. Residues His322, Asp355, Glu409, and His414 each contribute to the substrate site. Asp355 is a binding site for Zn(2+). Residue His414 coordinates Zn(2+).

It belongs to the histidinol dehydrogenase family. Zn(2+) serves as cofactor.

It catalyses the reaction L-histidinol + 2 NAD(+) + H2O = L-histidine + 2 NADH + 3 H(+). It participates in amino-acid biosynthesis; L-histidine biosynthesis; L-histidine from 5-phospho-alpha-D-ribose 1-diphosphate: step 9/9. Catalyzes the sequential NAD-dependent oxidations of L-histidinol to L-histidinaldehyde and then to L-histidine. In Bacillus subtilis (strain 168), this protein is Histidinol dehydrogenase (hisD).